A 276-amino-acid polypeptide reads, in one-letter code: MTDLYAVFGNPINHSKSPSIHRMFAEQTGQDLHYTKQLVDVDKFAQTADAFFAQGGRGLNITVPFKQEAFRYAHSLTPRAERAGAVNFLVQLSDGSIRGDNTDGIGMVHDMHNLDWNIAGKRVLLLGAGGAVRGVLQPLLEEHPAQVVIANRTLSKAEELAKNFLDLGNVEAKGYDQLNGAHFDIVINGTSASLHGELPPLPDNLLNPGACCYDMMYGAEPTVFLQWAQQQGAAHTADGLGMLVGQAAEAFYLWRQIRPEVVPVLTALRRQLHEKK.

Residues serine 15 to serine 17 and threonine 62 contribute to the shikimate site. Lysine 66 serves as the catalytic Proton acceptor. Shikimate contacts are provided by asparagine 87 and aspartate 103. NADP(+) contacts are provided by residues glycine 127–alanine 131, asparagine 151–lysine 156, and methionine 215. Tyrosine 217 provides a ligand contact to shikimate. Glycine 239 serves as a coordination point for NADP(+).

This sequence belongs to the shikimate dehydrogenase family. In terms of assembly, homodimer.

The catalysed reaction is shikimate + NADP(+) = 3-dehydroshikimate + NADPH + H(+). It participates in metabolic intermediate biosynthesis; chorismate biosynthesis; chorismate from D-erythrose 4-phosphate and phosphoenolpyruvate: step 4/7. Its function is as follows. Involved in the biosynthesis of the chorismate, which leads to the biosynthesis of aromatic amino acids. Catalyzes the reversible NADPH linked reduction of 3-dehydroshikimate (DHSA) to yield shikimate (SA). The sequence is that of Shikimate dehydrogenase (NADP(+)) from Cellvibrio japonicus (strain Ueda107) (Pseudomonas fluorescens subsp. cellulosa).